Here is a 116-residue protein sequence, read N- to C-terminus: Vesicle-associated membrane protein 5 (116 aa).

Over M1–C72 the chain is Cytoplasmic. The v-SNARE coiled-coil homology domain maps to E5 to E65. 3 positions are modified to phosphoserine: S41, S48, and S49. A helical; Anchor for type IV membrane protein membrane pass occupies residues V73–L93. Residues P94–N116 lie on the Vesicular side of the membrane. The interval S96–N116 is disordered.

The protein belongs to the synaptobrevin family. (Microbial infection) Targeted and hydrolyzed by C.botulinum neurotoxin type X (BoNT/X) which hydrolyzes the 40-Arg-|-Ser-41 bond and probably inhibits neurotransmitter release. It remains unknown whether BoNT/X is ever produced, or what organisms it targets.

Its subcellular location is the cell membrane. The protein resides in the endomembrane system. It localises to the golgi apparatus. The protein localises to the trans-Golgi network membrane. In terms of biological role, may participate in trafficking events that are associated with myogenesis, such as myoblast fusion and/or GLUT4 trafficking. This is Vesicle-associated membrane protein 5 (VAMP5) from Homo sapiens (Human).